The following is a 236-amino-acid chain: Small ribosomal subunit protein uS3 (236 aa).

The KH type-2 domain occupies 39–107 (IRSYVLEELR…ETSLNIVEIR (69 aa)). A disordered region spans residues 214–236 (ASERRATEADQSGSSSNRRRENA).

Belongs to the universal ribosomal protein uS3 family. Part of the 30S ribosomal subunit. Forms a tight complex with proteins S10 and S14.

Functionally, binds the lower part of the 30S subunit head. Binds mRNA in the 70S ribosome, positioning it for translation. This is Small ribosomal subunit protein uS3 from Bartonella tribocorum (strain CIP 105476 / IBS 506).